The primary structure comprises 54 residues: uncharacterized protein (54 aa).

Residues 1–54 (MWTLKARKEHTGISGKPTARTDRHGSTRSGDSELQASARRFSRLPDRCGAQGVT) form a disordered region.

This is an uncharacterized protein from Mycobacterium tuberculosis (strain ATCC 25618 / H37Rv).